A 239-amino-acid chain; its full sequence is Peptidase E (239 aa).

Residues Ser122, Asp137, and His159 each act as charge relay system in the active site.

This sequence belongs to the peptidase S51 family.

Its subcellular location is the cytoplasm. It catalyses the reaction Dipeptidase E catalyzes the hydrolysis of dipeptides Asp-|-Xaa. It does not act on peptides with N-terminal Glu, Asn or Gln, nor does it cleave isoaspartyl peptides.. Functionally, hydrolyzes dipeptides containing N-terminal aspartate residues. May play a role in allowing the cell to use peptide aspartate to spare carbon otherwise required for the synthesis of the aspartate family of amino acids. This chain is Peptidase E, found in Shewanella baltica (strain OS195).